We begin with the raw amino-acid sequence, 292 residues long: Probable porphobilinogen deaminase (292 aa).

Position 233 is an S-(dipyrrolylmethanemethyl)cysteine (Cys233).

Belongs to the HMBS family. The cofactor is dipyrromethane.

It catalyses the reaction 4 porphobilinogen + H2O = hydroxymethylbilane + 4 NH4(+). Its pathway is porphyrin-containing compound metabolism; protoporphyrin-IX biosynthesis; coproporphyrinogen-III from 5-aminolevulinate: step 2/4. In terms of biological role, tetrapolymerization of the monopyrrole PBG into the hydroxymethylbilane pre-uroporphyrinogen in several discrete steps. The polypeptide is Probable porphobilinogen deaminase (hemC) (Methanocaldococcus jannaschii (strain ATCC 43067 / DSM 2661 / JAL-1 / JCM 10045 / NBRC 100440) (Methanococcus jannaschii)).